The following is a 332-amino-acid chain: Glycerol-3-phosphate dehydrogenase [NAD(P)+] (332 aa).

Residues Trp-15, Arg-35, and Lys-108 each coordinate NADPH. Lys-108, Gly-137, and Ser-139 together coordinate sn-glycerol 3-phosphate. NADPH is bound at residue Ala-141. Positions 192, 245, 255, 256, and 257 each coordinate sn-glycerol 3-phosphate. Lys-192 serves as the catalytic Proton acceptor. Arg-256 is an NADPH binding site. NADPH-binding residues include Leu-278 and Glu-280.

Belongs to the NAD-dependent glycerol-3-phosphate dehydrogenase family.

Its subcellular location is the cytoplasm. It catalyses the reaction sn-glycerol 3-phosphate + NAD(+) = dihydroxyacetone phosphate + NADH + H(+). The enzyme catalyses sn-glycerol 3-phosphate + NADP(+) = dihydroxyacetone phosphate + NADPH + H(+). It participates in membrane lipid metabolism; glycerophospholipid metabolism. Functionally, catalyzes the reduction of the glycolytic intermediate dihydroxyacetone phosphate (DHAP) to sn-glycerol 3-phosphate (G3P), the key precursor for phospholipid synthesis. In Methylobacterium radiotolerans (strain ATCC 27329 / DSM 1819 / JCM 2831 / NBRC 15690 / NCIMB 10815 / 0-1), this protein is Glycerol-3-phosphate dehydrogenase [NAD(P)+].